We begin with the raw amino-acid sequence, 225 residues long: Claudin-8 (225 aa).

The Cytoplasmic portion of the chain corresponds to 1-7 (MATYALQ). The chain crosses the membrane as a helical span at residues 8–28 (MAALVLGGVGMVGTVAVTIMP). Residues 29–81 (QWRVSAFIESNIVVFENRWEGLWMNCMRHANIRMQCKVYDSLLALSPDLQASR) lie on the Extracellular side of the membrane. A helical transmembrane segment spans residues 82 to 102 (GLMCAASVLAFLAFMTAILGM). At 103-117 (KCTRCTGDDENVKSR) the chain is on the cytoplasmic side. The helical transmembrane segment at 118–138 (ILLTAGIIFFITGLVVLIPVS) threads the bilayer. Topologically, residues 139–166 (WVANSIIRDFYNPLVDVALKRELGEALY) are extracellular. The helical transmembrane segment at 167 to 187 (IGWTTALVLIAGGALFCCVFC) threads the bilayer. Over 188–225 (CTERSNSYRYSVPSHRTTQRSFHAEKRSPSIYSKSQYV) the chain is Cytoplasmic. Residue lysine 213 forms a Glycyl lysine isopeptide (Lys-Gly) (interchain with G-Cter in ubiquitin) linkage. Residues 224–225 (YV) form an interactions with TJP1, TJP2 and TJP3 region.

Belongs to the claudin family. In terms of assembly, can form heteropolymeric strands with other claudins. Interacts with CLDN4. Directly interacts with TJP1/ZO-1, TJP2/ZO-2 and TJP3/ZO-3. Interacts with KLHL3. Ubiquitinated by the BCR(KLHL3) E3 ubiquitin ligase complex in the kidney, leading to its degradation. Expressed primarily in lung and kidney. Present in both cortical and medullar collecting ducts (at protein level).

The protein resides in the cell junction. The protein localises to the tight junction. It is found in the cell membrane. The enzyme catalyses chloride(in) = chloride(out). It catalyses the reaction bromide(in) = bromide(out). The catalysed reaction is iodide(out) = iodide(in). It carries out the reaction fluoride(in) = fluoride(out). Its function is as follows. Can associate with other claudins to regulate tight junction structural and functional strand dynamics. May coassemble with CLDN4 into tight junction strands containing anion-selective channels that convey paracellular chloride permeability in renal collecting ducts. Cannot form tight junction strands on its own. The sequence is that of Claudin-8 from Mus musculus (Mouse).